The primary structure comprises 492 residues: MDFLLGNPFSSPVGQRIEKATDGSLQSEDWALNMEICDIINETEEGPKDAFRAVKKRIMGNKNFHEVMLALTVLETCVKNCGHRFHVLVANQDFVENVLVRTILPKNNPPTIVHDKVLNLIQSWADAFRSSPDLTGVVAVYEDLRRKGLEFPMTDLDMLSPIHTPQRTVFNSETPSRQNSVSSNTSQRGDLSQHATPLPTPAVLPGDSPITPTPEQIGKLRSELEMVSGNVRVMSEMLTELVPTQVEPADLELLQELNRTCRAMQQRILELIPRISNEQLTEELLMINDNLNNVFLRHERFERFRTGQTAKASSEAELATDLIDMGPDPAATNNLSSQLAGMNLGSRSVRAGLQSLETSGHLEDDFDMFALTRGSSLADQRKGVKYEAPQTTDGLAGALDARQQSTGAIPATQARIMEDIEQWLSTDVGNSAEEPSGVTSEEFDKFLEERAKAADRLPNLASPSAEGPPRPSPGTAPRRKTQEKDDDMLFAL.

Methionine 1 carries the post-translational modification N-acetylmethionine. Residue serine 11 is modified to Phosphoserine. The 133-residue stretch at 20–152 (ATDGSLQSED…DLRRKGLEFP (133 aa)) folds into the VHS domain. A KRKK motif is present at residues 48–56 (KDAFRAVKK). At serine 160 the chain carries Phosphoserine. Phosphothreonine is present on threonine 164. Positions 167-195 (RTVFNSETPSRQNSVSSNTSQRGDLSQHA) are enriched in polar residues. The segment at 167–215 (RTVFNSETPSRQNSVSSNTSQRGDLSQHATPLPTPAVLPGDSPITPTPE) is disordered. Phosphoserine is present on residues serine 176, serine 180, and serine 208. The GAT domain maps to 215–303 (EQIGKLRSEL…VFLRHERFER (89 aa)). The segment at 321 to 326 (DLIDMG) is clathrin box. Residues serine 355 and serine 376 each carry the phosphoserine modification. Lysine 385 is covalently cross-linked (Glycyl lysine isopeptide (Lys-Gly) (interchain with G-Cter in SUMO2)). Residues 392–463 (TDGLAGALDA…ADRLPNLASP (72 aa)) are interaction with MYO6. A disordered region spans residues 450-492 (RAKAADRLPNLASPSAEGPPRPSPGTAPRRKTQEKDDDMLFAL). Serine 462 carries the post-translational modification Phosphoserine.

This sequence belongs to the TOM1 family. As to quaternary structure, found in a complex with TOLLIP; interacts (via GAT domain) with TOLLIP (via N-terminus); the interactions leads to TOM1-recruitment to endosomes and inhibition of TOLLIP binding to PtdIns(3)P. Interacts (via GAT domain and the C-terminal part of the VHS domain) with UBC/ubiquitin. Interacts (via clathrin box and C-terminus) with clathrin heavy chain. Interacts with MYO6. Interacts with TAX1BP1; CALCOCO2/NDP52 and OPTN; the interaction is indirect and is mediated by MYO6, which acts as a bridge between TOM1 and the three autophagy receptors. Interacts (via C-terminus) with ZFYVE16 (via C-terminus); interaction is required to target TOM1 and clathrin to endosomes. Interacts with LRBA. Post-translationally, monoubiquitinated. In terms of tissue distribution, ubiquitous. In adult brain, it is highly expressed at the mesencephalic level, in the hippocampal formation and medial lemniscus. In cerebellum, it is highly expressed in Purkinje cells and granular layers.

The protein localises to the cytoplasm. Its subcellular location is the endosome membrane. It localises to the early endosome membrane. In terms of biological role, adapter protein that plays a role in the intracellular membrane trafficking of ubiquitinated proteins, thereby participating in autophagy, ubiquitination-dependent signaling and receptor recycling pathways. Acts as a MYO6/Myosin VI adapter protein that targets MYO6 to endocytic structures. Together with MYO6, required for autophagosomal delivery of endocytic cargo, the maturation of autophagosomes and their fusion with lysosomes. MYO6 links TOM1 with autophagy receptors, such as TAX1BP1; CALCOCO2/NDP52 and OPTN. Binds to polyubiquitinated proteins via its GAT domain. In a complex with TOLLIP, recruits ubiquitin-conjugated proteins onto early endosomes. The Tom1-Tollip complex may regulate endosomal trafficking by linking polyubiquitinated proteins to clathrin. Mediates clathrin recruitment to early endosomes by ZFYVE16. Modulates binding of TOLLIP to phosphatidylinositol 3-phosphate (PtdIns(3)P) via binding competition; the association with TOLLIP may favor the release of TOLLIP from endosomal membranes, allowing TOLLIP to commit to cargo trafficking. Acts as a phosphatidylinositol 5-phosphate (PtdIns(5)P) effector by binding to PtdIns(5)P, thereby regulating endosomal maturation. PtdIns(5)P-dependent recruitment to signaling endosomes may block endosomal maturation. Also inhibits Toll-like receptor (TLR) signaling and participates in immune receptor recycling. The sequence is that of Target of Myb1 membrane trafficking protein from Mus musculus (Mouse).